Reading from the N-terminus, the 398-residue chain is Bifunctional enzyme IspD/IspF (398 aa).

Residues 1-237 form a 2-C-methyl-D-erythritol 4-phosphate cytidylyltransferase region; it reads MSISIAAIIL…QKKMQMFPDI (237 aa). Positions 238-398 are 2-C-methyl-D-erythritol 2,4-cyclodiphosphate synthase; that stretch reads RVGNGYDVHS…SVLYPGEIPQ (161 aa). The a divalent metal cation site is built by aspartate 244 and histidine 246. 4-CDP-2-C-methyl-D-erythritol 2-phosphate contacts are provided by residues 244–246 and 270–271; these read DVH and HS. Histidine 278 is a binding site for a divalent metal cation. Residues 292-294, 368-371, phenylalanine 375, and arginine 378 contribute to the 4-CDP-2-C-methyl-D-erythritol 2-phosphate site; these read DIG and TTNE.

In the N-terminal section; belongs to the IspD/TarI cytidylyltransferase family. IspD subfamily. The protein in the C-terminal section; belongs to the IspF family. A divalent metal cation serves as cofactor.

The catalysed reaction is 2-C-methyl-D-erythritol 4-phosphate + CTP + H(+) = 4-CDP-2-C-methyl-D-erythritol + diphosphate. It catalyses the reaction 4-CDP-2-C-methyl-D-erythritol 2-phosphate = 2-C-methyl-D-erythritol 2,4-cyclic diphosphate + CMP. The protein operates within isoprenoid biosynthesis; isopentenyl diphosphate biosynthesis via DXP pathway; isopentenyl diphosphate from 1-deoxy-D-xylulose 5-phosphate: step 2/6. It participates in isoprenoid biosynthesis; isopentenyl diphosphate biosynthesis via DXP pathway; isopentenyl diphosphate from 1-deoxy-D-xylulose 5-phosphate: step 4/6. In terms of biological role, bifunctional enzyme that catalyzes the formation of 4-diphosphocytidyl-2-C-methyl-D-erythritol from CTP and 2-C-methyl-D-erythritol 4-phosphate (MEP) (IspD), and catalyzes the conversion of 4-diphosphocytidyl-2-C-methyl-D-erythritol 2-phosphate (CDP-ME2P) to 2-C-methyl-D-erythritol 2,4-cyclodiphosphate (ME-CPP) with a corresponding release of cytidine 5-monophosphate (CMP) (IspF). This Bartonella tribocorum (strain CIP 105476 / IBS 506) protein is Bifunctional enzyme IspD/IspF.